The chain runs to 204 residues: N-(5'-phosphoribosyl)anthranilate isomerase (204 aa).

This sequence belongs to the TrpF family.

The catalysed reaction is N-(5-phospho-beta-D-ribosyl)anthranilate = 1-(2-carboxyphenylamino)-1-deoxy-D-ribulose 5-phosphate. The protein operates within amino-acid biosynthesis; L-tryptophan biosynthesis; L-tryptophan from chorismate: step 3/5. The chain is N-(5'-phosphoribosyl)anthranilate isomerase from Desulforudis audaxviator (strain MP104C).